Reading from the N-terminus, the 211-residue chain is Pyridoxine/pyridoxamine 5'-phosphate oxidase (211 aa).

Residues 7-10 (RREY) and K65 each bind substrate. FMN contacts are provided by residues 60–65 (RIVLLK), 75–76 (YT), R81, K82, and Q104. Substrate is bound by residues Y122, R126, and S130. FMN contacts are provided by residues 139–140 (QS) and W184. 190 to 192 (RLH) lines the substrate pocket. Residue R194 participates in FMN binding.

This sequence belongs to the pyridoxamine 5'-phosphate oxidase family. As to quaternary structure, homodimer. FMN is required as a cofactor.

The catalysed reaction is pyridoxamine 5'-phosphate + O2 + H2O = pyridoxal 5'-phosphate + H2O2 + NH4(+). It carries out the reaction pyridoxine 5'-phosphate + O2 = pyridoxal 5'-phosphate + H2O2. Its pathway is cofactor metabolism; pyridoxal 5'-phosphate salvage; pyridoxal 5'-phosphate from pyridoxamine 5'-phosphate: step 1/1. It functions in the pathway cofactor metabolism; pyridoxal 5'-phosphate salvage; pyridoxal 5'-phosphate from pyridoxine 5'-phosphate: step 1/1. Its function is as follows. Catalyzes the oxidation of either pyridoxine 5'-phosphate (PNP) or pyridoxamine 5'-phosphate (PMP) into pyridoxal 5'-phosphate (PLP). In Vibrio vulnificus (strain CMCP6), this protein is Pyridoxine/pyridoxamine 5'-phosphate oxidase.